A 577-amino-acid polypeptide reads, in one-letter code: Nuclear receptor subfamily 4 group A member 1 (577 aa).

The nuclear receptor DNA-binding region spans 243 to 318 (EGRCAVCGDN…VGMVKEVVRT (76 aa)). 2 consecutive NR C4-type zinc fingers follow at residues 246-266 (CAVCGDNASCQHYGVRTCEGC) and 282-311 (CLANKDCPVDKRRRNRCQFCRFQKCLVVGM). The tract at residues 247–333 (AVCGDNASCQ…RRGRLPSKPK (87 aa)) is required for binding NBRE-containing DNA. Residues 339 to 574 (SPVDLINSLV…PIVDKIFMDT (236 aa)) enclose the NR LBD domain. Residues 500–523 (PKKVEELQSQIINCLKEHIPSSMN) are may bind lipopolysaccharide. The segment at 563-574 (PPPIVDKIFMDT) is AF-2.

This sequence belongs to the nuclear hormone receptor family. NR4 subfamily. The cofactor is Zn(2+).

Its subcellular location is the nucleus. It is found in the cytoplasm. The protein resides in the cytosol. In terms of biological role, orphan nuclear receptor. Binds the NGFI-B response element (NBRE) 5'-AAAAGGTCA-3'. Its function is as follows. In the cytosol, may detect bacterial lipopolysaccharide (LPS) and NBRE-containing mitochondrial DNA released during pyroptosis, and play a role in non-canonical inflammasome activation. In Xenopus laevis (African clawed frog), this protein is Nuclear receptor subfamily 4 group A member 1 (nr4a1).